We begin with the raw amino-acid sequence, 227 residues long: PKHD-type hydroxylase BamMC406_5004 (227 aa).

The Fe2OG dioxygenase domain occupies 80-179 (QVYPPLFNRY…RVASFFWVQS (100 aa)). 3 residues coordinate Fe cation: His98, Asp100, and His160. Residue Arg170 coordinates 2-oxoglutarate.

Requires Fe(2+) as cofactor. L-ascorbate is required as a cofactor.

This is PKHD-type hydroxylase BamMC406_5004 from Burkholderia ambifaria (strain MC40-6).